Here is a 187-residue protein sequence, read N- to C-terminus: Translation initiation factor IF-3 (187 aa).

It belongs to the IF-3 family. In terms of assembly, monomer.

It is found in the cytoplasm. Its function is as follows. IF-3 binds to the 30S ribosomal subunit and shifts the equilibrium between 70S ribosomes and their 50S and 30S subunits in favor of the free subunits, thus enhancing the availability of 30S subunits on which protein synthesis initiation begins. This is Translation initiation factor IF-3 from Leptospira biflexa serovar Patoc (strain Patoc 1 / Ames).